The sequence spans 207 residues: Large ribosomal subunit protein uL4 (207 aa).

The tract at residues 49–78 (HAVKNRSAVSGGGRKPWRQKGTGRARQGSI) is disordered.

The protein belongs to the universal ribosomal protein uL4 family. In terms of assembly, part of the 50S ribosomal subunit.

In terms of biological role, one of the primary rRNA binding proteins, this protein initially binds near the 5'-end of the 23S rRNA. It is important during the early stages of 50S assembly. It makes multiple contacts with different domains of the 23S rRNA in the assembled 50S subunit and ribosome. Functionally, forms part of the polypeptide exit tunnel. The polypeptide is Large ribosomal subunit protein uL4 (Streptococcus pneumoniae serotype 19F (strain G54)).